The sequence spans 152 residues: Aspartate carbamoyltransferase regulatory chain (152 aa).

Zn(2+) is bound by residues Cys107, Cys112, Cys136, and Cys139.

It belongs to the PyrI family. Contains catalytic and regulatory chains. Zn(2+) is required as a cofactor.

Its function is as follows. Involved in allosteric regulation of aspartate carbamoyltransferase. This is Aspartate carbamoyltransferase regulatory chain from Chromobacterium violaceum (strain ATCC 12472 / DSM 30191 / JCM 1249 / CCUG 213 / NBRC 12614 / NCIMB 9131 / NCTC 9757 / MK).